Reading from the N-terminus, the 27-residue chain is Alpha-amylase/trypsin inhibitor CM17 (27 aa).

The protein belongs to the protease inhibitor I6 (cereal trypsin/alpha-amylase inhibitor) family. In terms of tissue distribution, developing endosperm.

It localises to the secreted. Alpha-amylase/trypsin inhibitor. It could be involved in insect defense mechanisms. The protein is Alpha-amylase/trypsin inhibitor CM17 of Triticum aestivum (Wheat).